Consider the following 314-residue polypeptide: Small ribosomal subunit biogenesis GTPase RsgA (314 aa).

Residues 1–21 form a disordered region; the sequence is MKRAPTKQPAKPAARGGERAQ. Residues 85–246 form the CP-type G domain; it reads SDQFKSKLFA…LIDSPGFQEF (162 aa). GTP-binding positions include 134–137 and 188–196; these read NKID and GQSGMGKST. 4 residues coordinate Zn(2+): C270, C275, H277, and C283.

It belongs to the TRAFAC class YlqF/YawG GTPase family. RsgA subfamily. As to quaternary structure, monomer. Associates with 30S ribosomal subunit, binds 16S rRNA. Zn(2+) is required as a cofactor.

It is found in the cytoplasm. Functionally, one of several proteins that assist in the late maturation steps of the functional core of the 30S ribosomal subunit. Helps release RbfA from mature subunits. May play a role in the assembly of ribosomal proteins into the subunit. Circularly permuted GTPase that catalyzes slow GTP hydrolysis, GTPase activity is stimulated by the 30S ribosomal subunit. In Burkholderia mallei (strain ATCC 23344), this protein is Small ribosomal subunit biogenesis GTPase RsgA.